Reading from the N-terminus, the 123-residue chain is SGSCEVKTCWWAQPDFRVIGDYLKDKYDSASEMVVEKHRESRGWVETLRAKYELFKPPTERDLVYYENSPNFCEPNAETGSFGTRDRICNVTSHGIDGCDLLCCGRGHNTRTEKRKEKCHCIF.

The O-palmitoleoyl serine; by PORCN moiety is linked to residue Ser-1. A disulfide bridge connects residues Cys-89 and Cys-104. N-linked (GlcNAc...) asparagine glycosylation is present at Asn-90.

The protein belongs to the Wnt family. Post-translationally, palmitoleoylation is required for efficient binding to frizzled receptors. Depalmitoleoylation leads to Wnt signaling pathway inhibition.

It is found in the secreted. It localises to the extracellular space. Its subcellular location is the extracellular matrix. Ligand for members of the frizzled family of seven transmembrane receptors. Probable developmental protein. May be a signaling molecule which affects the development of discrete regions of tissues. Is likely to signal over only few cell diameters. This Alopias vulpinus (Common thresher shark) protein is Protein Wnt-3b (WNT-3B).